We begin with the raw amino-acid sequence, 166 residues long: MNLRQQLTQLLSIAYVFTSAFVAWKALSIVANSHSPIVVVLSGSMEPAFQRGDILFLWNRDSQAKVGDVVVYEIKGKSIPIVHRVLREHHGKDKQFLLTKGDNNALDDLSLYARKQNYLNQKTDLVGTVKAYLPKVGYVTILLTENMYFRYALLGFMGLSALLSGE.

The Cytoplasmic portion of the chain corresponds to 1 to 9 (MNLRQQLTQ). A helical; Signal-anchor for type II membrane protein transmembrane segment spans residues 10-31 (LLSIAYVFTSAFVAWKALSIVA). Over 32–166 (NSHSPIVVVL…MGLSALLSGE (135 aa)) the chain is Lumenal. Catalysis depends on charge relay system residues S44, H83, and D108. Residues 152-163 (ALLGFMGLSALL) are C-terminal short (CTS) helix.

The protein belongs to the peptidase S26B family. Component of the signal peptidase complex (SPC) composed of a catalytic subunit SEC11 and three accessory subunits SPC1, SPC2 and SPC3. The complex induces a local thinning of the ER membrane which is used to measure the length of the signal peptide (SP) h-region of protein substrates. This ensures the selectivity of the complex towards h-regions shorter than 18-20 amino acids. SPC associates with the translocon complex.

It is found in the endoplasmic reticulum membrane. The enzyme catalyses Cleavage of hydrophobic, N-terminal signal or leader sequences from secreted and periplasmic proteins.. In terms of biological role, catalytic component of the signal peptidase complex (SPC) which catalyzes the cleavage of N-terminal signal sequences from nascent proteins as they are translocated into the lumen of the endoplasmic reticulum. Specifically cleaves N-terminal signal peptides that contain a hydrophobic alpha-helix (h-region) shorter than 18-20 amino acids. This is Signal peptidase complex catalytic subunit SEC11 (SEC11) from Clavispora lusitaniae (strain ATCC 42720) (Yeast).